Consider the following 68-residue polypeptide: MNFIRQGLGIALQPELTLKSIAGELCSVPLEPTFYRQISLLAKEKPVEGSPLFLLQMCMEQLVAIGKI.

The protein is Putative protein YfaH (yfaH) of Escherichia coli (strain K12).